The primary structure comprises 380 residues: Cytochrome b (380 aa).

4 helical membrane passes run 34 to 54, 78 to 99, 114 to 134, and 179 to 199; these read FGSLLAVCLTTQILTGLLLAM, WLIRNLHANGASFFFICIFLHI, WNTGVILLLTLMATAFVGYVL, and FFALHFLLPFVITGITITHLM. Residues His84 and His98 each coordinate heme b. 2 residues coordinate heme b: His183 and His197. An a ubiquinone-binding site is contributed by His202. 4 helical membrane-spanning segments follow: residues 227–247, 289–309, 321–341, and 348–368; these read LKDILGLALMLTPFLTLALFS, LGGVLALAASVLILLLIPFLH, LSQALFWLLVANLLILTWVGS, and FIIIGQMASLSYFTILLILFP.

This sequence belongs to the cytochrome b family. The cytochrome bc1 complex contains 11 subunits: 3 respiratory subunits (MT-CYB, CYC1 and UQCRFS1), 2 core proteins (UQCRC1 and UQCRC2) and 6 low-molecular weight proteins (UQCRH/QCR6, UQCRB/QCR7, UQCRQ/QCR8, UQCR10/QCR9, UQCR11/QCR10 and a cleavage product of UQCRFS1). This cytochrome bc1 complex then forms a dimer. The cofactor is heme b.

The protein resides in the mitochondrion inner membrane. Its function is as follows. Component of the ubiquinol-cytochrome c reductase complex (complex III or cytochrome b-c1 complex) that is part of the mitochondrial respiratory chain. The b-c1 complex mediates electron transfer from ubiquinol to cytochrome c. Contributes to the generation of a proton gradient across the mitochondrial membrane that is then used for ATP synthesis. The protein is Cytochrome b (MT-CYB) of Syrmaticus reevesii (Reeves's pheasant).